We begin with the raw amino-acid sequence, 548 residues long: Non-structural protein NS1 (548 aa).

The protein belongs to the orbivirus non-structural protein NS1 family.

This is Non-structural protein NS1 (Segment-5) from Camelus dromedarius (Dromedary).